We begin with the raw amino-acid sequence, 234 residues long: UDP-2,3-diacylglucosamine hydrolase (234 aa).

5 residues coordinate Mn(2+): Asp9, His11, Asp42, Asn80, and His115. Residue 80–81 (NR) coordinates substrate. Residues Asp123, Ser161, Lys165, Lys168, and His196 each contribute to the substrate site. Mn(2+) contacts are provided by His196 and His198.

The protein belongs to the LpxH family. Mn(2+) serves as cofactor.

The protein localises to the cell inner membrane. The enzyme catalyses UDP-2-N,3-O-bis[(3R)-3-hydroxytetradecanoyl]-alpha-D-glucosamine + H2O = 2-N,3-O-bis[(3R)-3-hydroxytetradecanoyl]-alpha-D-glucosaminyl 1-phosphate + UMP + 2 H(+). Its pathway is glycolipid biosynthesis; lipid IV(A) biosynthesis; lipid IV(A) from (3R)-3-hydroxytetradecanoyl-[acyl-carrier-protein] and UDP-N-acetyl-alpha-D-glucosamine: step 4/6. Functionally, hydrolyzes the pyrophosphate bond of UDP-2,3-diacylglucosamine to yield 2,3-diacylglucosamine 1-phosphate (lipid X) and UMP by catalyzing the attack of water at the alpha-P atom. Involved in the biosynthesis of lipid A, a phosphorylated glycolipid that anchors the lipopolysaccharide to the outer membrane of the cell. This is UDP-2,3-diacylglucosamine hydrolase from Haemophilus ducreyi (strain 35000HP / ATCC 700724).